Reading from the N-terminus, the 328-residue chain is Phenylalanine--tRNA ligase alpha subunit (328 aa).

Glu245 contributes to the Mg(2+) binding site.

It belongs to the class-II aminoacyl-tRNA synthetase family. Phe-tRNA synthetase alpha subunit type 1 subfamily. In terms of assembly, tetramer of two alpha and two beta subunits. The cofactor is Mg(2+).

It localises to the cytoplasm. The catalysed reaction is tRNA(Phe) + L-phenylalanine + ATP = L-phenylalanyl-tRNA(Phe) + AMP + diphosphate + H(+). The chain is Phenylalanine--tRNA ligase alpha subunit from Helicobacter pylori (strain Shi470).